Here is a 153-residue protein sequence, read N- to C-terminus: Cytochrome c-type biogenesis protein CcmE (153 aa).

Over 1-8 (MTPVQRRR) the chain is Cytoplasmic. Residues 9–29 (LVWVLLALLASGLATALVAMA) form a helical; Signal-anchor for type II membrane protein membrane-spanning segment. Over 30-153 (LERNIAYLYT…DVPVTAPEVR (124 aa)) the chain is Periplasmic. 2 residues coordinate heme: His-123 and Tyr-127.

Belongs to the CcmE/CycJ family.

The protein resides in the cell inner membrane. Functionally, heme chaperone required for the biogenesis of c-type cytochromes. Transiently binds heme delivered by CcmC and transfers the heme to apo-cytochromes in a process facilitated by CcmF and CcmH. This is Cytochrome c-type biogenesis protein CcmE from Stenotrophomonas maltophilia (strain R551-3).